A 97-amino-acid chain; its full sequence is Integration host factor subunit alpha (97 aa).

This sequence belongs to the bacterial histone-like protein family. In terms of assembly, heterodimer of an alpha and a beta chain.

This protein is one of the two subunits of integration host factor, a specific DNA-binding protein that functions in genetic recombination as well as in transcriptional and translational control. In Hydrogenovibrio crunogenus (strain DSM 25203 / XCL-2) (Thiomicrospira crunogena), this protein is Integration host factor subunit alpha.